The following is a 2332-amino-acid chain: Genome polyprotein (2332 aa).

The 201-residue stretch at 1–201 folds into the Peptidase C28 domain; that stretch reads MNTTDCFIAL…WKAKVQRKLK (201 aa). The Cytoplasmic portion of the chain corresponds to 1-1480; sequence MNTTDCFIAL…SFVKRAFKRL (1480 aa). Catalysis depends on for leader protease activity residues cysteine 51, histidine 148, and aspartate 163. Disordered stretches follow at residues 197-218 and 238-265; these read QRKL…QSGN and QLGD…NTQN. A lipid anchor (N-myristoyl glycine; by host) is attached at glycine 202. Polar residues-rich tracts occupy residues 204 to 218 and 238 to 251; these read GQSS…QSGN and QLGD…SNEG. Residues 252 to 265 show a composition bias toward low complexity; sequence STDTTSTHTTNTQN. A disulfide bridge links cysteine 406 with cysteine 858. The tract at residues 788–796 is antigenic epitope; sequence ALLRASTYY. The Cell attachment site motif lies at 869–871; sequence RGD. The SF3 helicase domain occupies 1189-1353; sequence NVHIANLCKV…DGYKINSKLD (165 aa). 1217 to 1224 contributes to the ATP binding site; that stretch reads GKSGQGKS. The stretch at 1481 to 1501 is an intramembrane region; sequence KENFEIVALCLTLLANIVIMI. Residues 1502–2332 are Cytoplasmic-facing; it reads RETRKRQKMV…RWVNAVCGDA (831 aa). Basic and acidic residues predominate over residues 1529 to 1538; that stretch reads KTLDEAEKSP. Residues 1529 to 1584 form a disordered region; the sequence is KTLDEAEKSPLETSGASTVGFRERTLPGQKACDDVNSEPAQPVEEQPQAEGPYAGP. An O-(5'-phospho-RNA)-tyrosine mark is found at tyrosine 1581, tyrosine 1604, and tyrosine 1628. A Peptidase C3 domain is found at 1652–1848; it reads APPTDLQKMV…YCSCVSRSML (197 aa). Catalysis depends on histidine 1695, which acts as the For protease 3C activity; Proton donor/acceptor. Residues aspartate 1733 and cysteine 1812 each act as for protease 3C activity in the active site. 2 short sequence motifs (nuclear localization signal) span residues 1878–1886 and 1879–1886; these read MRKTKLAPT and RKTKLAPT. Residues 2096 to 2214 enclose the RdRp catalytic domain; that stretch reads RNVWDVDYSA…ASDYDLDFEA (119 aa). Residue aspartate 2200 is the For RdRp activity of the active site.

This sequence belongs to the picornaviruses polyprotein family. Interacts with host ISG15. In terms of assembly, interacts (via R-G-D motif) with host ITGAV/ITGB6. Interacts with host MAVS; this interaction inhibits binding of host TRAF3 to MAVS, thereby suppressing interferon-mediated responses. As to quaternary structure, forms homooligomers. Homohexamer. Interacts with host VIM. Interacts with host BECN1. In terms of assembly, interacts with host DCTN3. As to quaternary structure, interacts with RNA-dependent RNA polymerase; this interaction allows 3B-1 to binds 2 polymerases and act as a primer. It also allows the recruitment of the RNA-dependent RNA polymerase to host membranes. Interacts with RNA-dependent RNA polymerase; this interaction allows 3B-2 to act as a primer. In terms of assembly, interacts with RNA-dependent RNA polymerase; this interaction allows 3B-3 to act as a primer. As to quaternary structure, interacts with 3B-1; this interaction allows 3B-1 to binds 2 polymerases and act as a primer. It also allows the recruitment of the RNA-dependent RNA polymerase to host membranes. Interacts with 3B-2; this interaction allows 3B-2 to act as a primer. Interacts with 3B-3; this interaction allows 3B-3 to act as a primer. Removes six residues from its own C-terminus, generating sLb(pro). Post-translationally, specific enzymatic cleavages in vivo by the viral proteases yield a variety of precursors and mature proteins. The polyprotein seems to be cotranslationally cleaved at the 2A/2B junction by a ribosomal skip from one codon to the next without formation of a peptide bond. This process would release the L-P1-2A peptide from the translational complex. In terms of processing, during virion maturation, immature virions are rendered infectious following cleavage of VP0 into VP4 and VP2. This maturation seems to be an autocatalytic event triggered by the presence of RNA in the capsid and is followed by a conformational change of the particle. Myristoylation is required during RNA encapsidation and formation of the mature virus particle. Post-translationally, uridylylated by the polymerase and covalently linked to the 5'-end of genomic RNA. These uridylylated forms act as a nucleotide-peptide primer for the polymerase. In terms of processing, the disulfide bond between VP1 and VP2 occurs after release of virus from the host cell.

The protein localises to the host nucleus. The protein resides in the host cytoplasm. It is found in the virion. It localises to the host endoplasmic reticulum membrane. Its subcellular location is the host cytoplasmic vesicle membrane. It carries out the reaction Autocatalytically cleaves itself from the polyprotein of the foot-and-mouth disease virus by hydrolysis of a Lys-|-Gly bond, but then cleaves host cell initiation factor eIF-4G at bonds -Gly-|-Arg- and -Lys-|-Arg-.. It catalyses the reaction a ribonucleoside 5'-triphosphate + H2O = a ribonucleoside 5'-diphosphate + phosphate + H(+). The catalysed reaction is RNA(n) + a ribonucleoside 5'-triphosphate = RNA(n+1) + diphosphate. The enzyme catalyses Selective cleavage of Gln-|-Gly bond in the poliovirus polyprotein. In other picornavirus reactions Glu may be substituted for Gln, and Ser or Thr for Gly.. Functionally, autocatalytically cleaves itself from the polyprotein at the L/VP0 junction. Also cleaves the host translation initiation factors EIF4G1 and EIF4G3, in order to shut off the capped cellular mRNA transcription. Plays a role in counteracting host innate antiviral response using diverse mechanisms. Possesses a deubiquitinase activity acting on both 'Lys-48' and 'Lys-63'-linked polyubiquitin chains. In turn, inhibits the ubiquitination and subsequent activation of key signaling molecules of type I IFN response such as host RIGI, TBK1, TRAF3 and TRAF6. Inhibits host NF-kappa-B activity by inducing a decrease in RELA mRNA levels. Cleaves a peptide bond in the C-terminus of host ISG15, resulting in the damaging of this modifier that can no longer be attached to target proteins. Also cleaves host G3BP1 and G3BP2 in order to inhibit cytoplasmic stress granules assembly. Lies on the inner surface of the capsid shell. After binding to the host receptor, the capsid undergoes conformational changes. Capsid protein VP4 is released, capsid protein VP1 N-terminus is externalized, and together, they shape a pore in the host membrane through which the viral genome is translocated into the host cell cytoplasm. After genome has been released, the channel shrinks. Its function is as follows. Forms an icosahedral capsid of pseudo T=3 symmetry with capsid proteins VP1 and VP3. The capsid is composed of 60 copies of each capsid protein organized in the form of twelve pentamers and encloses the viral positive strand RNA genome. Upon acidifcation in the endosome, dissociates into pentamers. In terms of biological role, forms an icosahedral capsid of pseudo T=3 symmetry with capsid proteins VP2 and VP3. The capsid is composed of 60 copies of each capsid protein organized in the form of twelve pentamers and encloses the viral positive strand RNA genome. Mediates cell entry by attachment to an integrin receptor, usually host ITGAV/ITGB6, via a conserved arginine-glycine-aspartic acid (R-G-D) motif. In addition, targets host MAVS to suppress type I IFN pathway. Upon acidifcation in the endosome, dissociates into pentamers. Functionally, forms an icosahedral capsid of pseudo T=3 symmetry with capsid proteins VP0 and VP3. The capsid is composed of 60 copies of each capsid protein organized in the form of twelve pentamers and encloses the viral positive strand RNA genome. Upon acidifcation in the endosome, dissociates into pentamers. Mediates self-processing of the polyprotein by a translational effect termed 'ribosome skipping'. Mechanistically, 2A-mediated cleavage occurs between the C-terminal glycine and the proline of the downstream protein 2B. In the case of foot-and-mouth disease virus, the 2A oligopeptide is post-translationally 'trimmed' from the C-terminus of the upstream protein 1D by 3C proteinase. Its function is as follows. Plays an essential role in the virus replication cycle by acting as a viroporin. Creates a pore in the host endoplasmic reticulum and as a consequence releases Ca2+ in the cytoplasm of infected cell. In turn, high levels of cytoplasmic calcium may trigger membrane trafficking and transport of viral ER-associated proteins to viroplasms, sites of viral genome replication. In terms of biological role, associates with and induces structural rearrangements of intracellular membranes. Triggers host autophagy by interacting with host BECN1 and thereby promotes viral replication. Participates in viral replication and interacts with host DHX9. Displays RNA-binding, nucleotide binding and NTPase activities. May play a role in virion morphogenesis and viral RNA encapsidation by interacting with the capsid protein VP3. Functionally, plays important roles in virus replication, virulence and host range. Cooperates with host DDX56 to inhibit IRF3 nuclear translocation and subsequent type I interferon production. Covalently linked to the 5'-end of both the positive-strand and negative-strand genomic RNAs. Acts as a genome-linked replication primer. Its function is as follows. Cysteine protease that generates mature viral proteins from the precursor polyprotein. In addition to its proteolytic activity, binds to viral RNA and thus influences viral genome replication. RNA and substrate bind cooperatively to the protease. In terms of biological role, RNA-directed RNA polymerase 3D-POL replicates genomic and antigenomic RNA by recognizing replications specific signals. Covalently attaches UMP to a tyrosine of VPg, which is used to prime RNA synthesis. The positive stranded RNA genome is first replicated at virus induced membranous vesicles, creating a dsRNA genomic replication form. This dsRNA is then used as template to synthesize positive stranded RNA genomes. ss(+)RNA genomes are either translated, replicated or encapsidated. The sequence is that of Genome polyprotein from Bos taurus (Bovine).